The primary structure comprises 143 residues: Flagellar assembly factor FliW (143 aa).

This sequence belongs to the FliW family. In terms of assembly, interacts with translational regulator CsrA and flagellin(s).

It localises to the cytoplasm. Its function is as follows. Acts as an anti-CsrA protein, binds CsrA and prevents it from repressing translation of its target genes, one of which is flagellin. Binds to flagellin and participates in the assembly of the flagellum. The sequence is that of Flagellar assembly factor FliW from Clostridium novyi (strain NT).